Here is a 428-residue protein sequence, read N- to C-terminus: UPF0229 protein YeaH (428 aa).

Residues 78–90 (GNDHFIQNDRIER) are compositionally biased toward basic and acidic residues. The tract at residues 78–111 (GNDHFIQNDRIERPQGGGGGGSGSGQGQASQDGE) is disordered. A compositionally biased stretch (gly residues) spans 92-103 (QGGGGGGSGSGQ).

The protein belongs to the UPF0229 family.

The chain is UPF0229 protein YeaH from Salmonella enteritidis PT4 (strain P125109).